The sequence spans 189 residues: Interferon alpha-12 (189 aa).

The first 23 residues, 1 to 23 (MARLCAFLMTLLVMSYWSTCSLG), serve as a signal peptide directing secretion. 2 cysteine pairs are disulfide-bonded: Cys-24–Cys-122 and Cys-52–Cys-162. N-linked (GlcNAc...) asparagine glycosylation is present at Asn-101.

The protein belongs to the alpha/beta interferon family.

The protein localises to the secreted. Its function is as follows. Produced by macrophages, IFN-alpha have antiviral activities. Interferon stimulates the production of two enzymes: a protein kinase and an oligoadenylate synthetase. This chain is Interferon alpha-12 (Ifna12), found in Mus musculus (Mouse).